Reading from the N-terminus, the 205-residue chain is MIGRLSGILVEKQAPEVVLDVNGVGYELQVPMTSFYELPALNQAAMLFTHFVVREDAQLLYGFITKQERALFRLLIKTNGVGPKLALTILSGMTASEFVSCVERDDIATLVKLPGVGKKTAERLVIEMRDKLKSLLEASAGSEREFMLQSNYTPAAAVDSAEEDAISALLSLGYKPAQASKSVSAAFKEGMSSETLIKAALKSML.

The domain I stretch occupies residues M1–I64. The segment at T65–E143 is domain II. The interval R144–A156 is flexible linker. A domain III region spans residues A157–L205.

This sequence belongs to the RuvA family. In terms of assembly, homotetramer. Forms an RuvA(8)-RuvB(12)-Holliday junction (HJ) complex. HJ DNA is sandwiched between 2 RuvA tetramers; dsDNA enters through RuvA and exits via RuvB. An RuvB hexamer assembles on each DNA strand where it exits the tetramer. Each RuvB hexamer is contacted by two RuvA subunits (via domain III) on 2 adjacent RuvB subunits; this complex drives branch migration. In the full resolvosome a probable DNA-RuvA(4)-RuvB(12)-RuvC(2) complex forms which resolves the HJ.

The protein localises to the cytoplasm. In terms of biological role, the RuvA-RuvB-RuvC complex processes Holliday junction (HJ) DNA during genetic recombination and DNA repair, while the RuvA-RuvB complex plays an important role in the rescue of blocked DNA replication forks via replication fork reversal (RFR). RuvA specifically binds to HJ cruciform DNA, conferring on it an open structure. The RuvB hexamer acts as an ATP-dependent pump, pulling dsDNA into and through the RuvAB complex. HJ branch migration allows RuvC to scan DNA until it finds its consensus sequence, where it cleaves and resolves the cruciform DNA. The polypeptide is Holliday junction branch migration complex subunit RuvA (Shewanella frigidimarina (strain NCIMB 400)).